We begin with the raw amino-acid sequence, 509 residues long: Telomeric repeat-binding factor 2-interacting protein 1 (509 aa).

The BRCT domain occupies Met-1–Leu-91. Residues Gly-93–Ser-168 form a disordered region. Residues Val-115 to Gln-127 show a composition bias toward polar residues. Over residues Arg-159 to Ser-168 the composition is skewed to basic and acidic residues. Residues Arg-185–Leu-239 enclose the Myb-like domain. 2 disordered regions span residues Leu-249–Asp-359 and Asp-399–Gly-423. Basic and acidic residues-rich tracts occupy residues Gly-286–Ser-296 and Val-321–Glu-344. The span at Pro-401–Ala-418 shows a compositional bias: polar residues. The Nuclear localization signal signature appears at Gln-493–Ser-509.

Belongs to the RAP1 family. As to quaternary structure, homodimer. Component of the shelterin complex (telosome). Interacts with terf2; the interaction is direct.

It localises to the nucleus. The protein localises to the chromosome. Its subcellular location is the telomere. In terms of biological role, acts both as a regulator of telomere function and as a transcription regulator. Involved in the regulation of telomere length and protection as a component of the shelterin complex (telosome). Does not bind DNA directly: recruited to telomeric double-stranded 5'-TTAGGG-3' repeats via its interaction with terf2. Independently of its function in telomeres, also acts as a transcription regulator: recruited to extratelomeric 5'-TTAGGG-3' sites via its association with terf2 or other factors, and regulates gene expression. In Xenopus tropicalis (Western clawed frog), this protein is Telomeric repeat-binding factor 2-interacting protein 1 (terf2ip).